The following is a 455-amino-acid chain: Retinoic acid receptor beta (455 aa).

Residues 1–87 form a modulating region; it reads MTTSSRTCPV…PLPPPRVYKP (87 aa). The tract at residues 44 to 78 is disordered; sequence LQSHPPTSGCSTPSPATVETQSTSSEELVPSPPSP. The segment covering 47-66 has biased composition (polar residues); the sequence is HPPTSGCSTPSPATVETQST. NR C4-type zinc fingers lie at residues 88–108 and 124–148; these read CFVCQDKSSGYHYGVSACEGC and CHRDKNCVINKVTRNRCQYCRLQKC. The nuclear receptor DNA-binding region spans 88–153; that stretch reads CFVCQDKSSG…RLQKCFEVGM (66 aa). The hinge stretch occupies residues 154 to 182; it reads SKESVRNDRNKKKKEPTKQESTENYEMTA. An NR LBD domain is found at 183–417; it reads ELDDLTEKIR…PLIQEMLENS (235 aa). Residues 416-455 are disordered; sequence NSEGHEPLTPTSNGNTAEHSPSISPSSVDNSSVSQSPMVQ. Positions 424 to 434 are enriched in polar residues; sequence TPTSNGNTAEH. The segment covering 435 to 455 has biased composition (low complexity); the sequence is SPSISPSSVDNSSVSQSPMVQ.

The protein belongs to the nuclear hormone receptor family. NR1 subfamily. Heterodimer; with a RXR molecule. Binds DNA preferentially as a RAR/RXR heterodimer.

It is found in the nucleus. Functionally, receptor for retinoic acid. Retinoic acid receptors bind as heterodimers to their target response elements in response to their ligands, all-trans or 9-cis retinoic acid, and regulate gene expression in various biological processes. The RAR/RXR heterodimers bind to the retinoic acid response elements (RARE) composed of tandem 5'-AGGTCA-3' sites known as DR1-DR5. Required for limb and craniofacial development. The protein is Retinoic acid receptor beta (RARB) of Gallus gallus (Chicken).